A 334-amino-acid chain; its full sequence is CRISPR-associated endonuclease Cas1 (334 aa).

Positions 161, 226, and 241 each coordinate Mn(2+).

The protein belongs to the CRISPR-associated endonuclease Cas1 family. In terms of assembly, homodimer, forms a heterotetramer with a Cas2 homodimer. Requires Mg(2+) as cofactor. Mn(2+) serves as cofactor.

CRISPR (clustered regularly interspaced short palindromic repeat), is an adaptive immune system that provides protection against mobile genetic elements (viruses, transposable elements and conjugative plasmids). CRISPR clusters contain spacers, sequences complementary to antecedent mobile elements, and target invading nucleic acids. CRISPR clusters are transcribed and processed into CRISPR RNA (crRNA). Acts as a dsDNA endonuclease. Involved in the integration of spacer DNA into the CRISPR cassette. The sequence is that of CRISPR-associated endonuclease Cas1 from Methanothermobacter thermautotrophicus (strain ATCC 29096 / DSM 1053 / JCM 10044 / NBRC 100330 / Delta H) (Methanobacterium thermoautotrophicum).